The primary structure comprises 162 residues: NADH-quinone oxidoreductase subunit I (162 aa).

4Fe-4S ferredoxin-type domains lie at 54–83 and 93–122; these read RRYENGEERCIACKLCEVVCPALAITINST and SSYEMDLFKCIFCGYCEESCPVDSIVETNI. C63, C66, C69, C73, C102, C105, C108, and C112 together coordinate [4Fe-4S] cluster.

The protein belongs to the complex I 23 kDa subunit family. As to quaternary structure, NDH-1 is composed of 14 different subunits. Subunits NuoA, H, J, K, L, M, N constitute the membrane sector of the complex. [4Fe-4S] cluster serves as cofactor.

Its subcellular location is the cell inner membrane. It catalyses the reaction a quinone + NADH + 5 H(+)(in) = a quinol + NAD(+) + 4 H(+)(out). Functionally, NDH-1 shuttles electrons from NADH, via FMN and iron-sulfur (Fe-S) centers, to quinones in the respiratory chain. The immediate electron acceptor for the enzyme in this species is believed to be ubiquinone. Couples the redox reaction to proton translocation (for every two electrons transferred, four hydrogen ions are translocated across the cytoplasmic membrane), and thus conserves the redox energy in a proton gradient. This is NADH-quinone oxidoreductase subunit I from Francisella tularensis subsp. tularensis (strain FSC 198).